A 397-amino-acid polypeptide reads, in one-letter code: Odorant receptor 2a (397 aa).

Residues 1-38 (MEKQEDFKLNTHSAVYYHWRVWELTGLMRPPGVSSLLY) lie on the Cytoplasmic side of the membrane. Residues 39 to 59 (VVYSITVNLVVTVLFPLSLLA) traverse the membrane as a helical segment. The Extracellular portion of the chain corresponds to 60 to 72 (RLLFTTNMAGLCE). Residues 73 to 92 (NLTITITDIVANLKFANVYM) traverse the membrane as a helical segment. Topologically, residues 93-131 (VRKQLHEIRSLLRLMDARARLVGDPEEISALRKEVNIAQ) are cytoplasmic. A helical transmembrane segment spans residues 132–150 (GTFRTFASIFVFGTTLSCV). The Extracellular segment spans residues 151 to 176 (RVVVRPDRELLYPAWFGVDWMHSTRN). The helical transmembrane segment at 177–197 (YVLINIYQLFGLIVQAIQNCA) threads the bilayer. Residues 198–272 (SDSYPPAFLC…IIQRVLSVPC (75 aa)) are Cytoplasmic-facing. Residues 273 to 293 (MAQFVCSAAVQCTVAMHFLYV) form a helical membrane-spanning segment. The Extracellular portion of the chain corresponds to 294–301 (ADDHDHTA). A helical membrane pass occupies residues 302–322 (MIISIVFFSAVTLEVFVICYF). At 323-363 (GDRMRTQSEALCDAFYDCNWIEQLPKFKRELLFTLARTQRP) the chain is on the cytoplasmic side. The helical transmembrane segment at 364-383 (SLIYAGNYIALSLETFEQVM) threads the bilayer. Over 384–397 (RFTYSVFTLLLRAK) the chain is Extracellular.

It belongs to the insect chemoreceptor superfamily. Heteromeric odorant receptor channel (TC 1.A.69) family. Or2a subfamily. Interacts with Orco. Complexes exist early in the endomembrane system in olfactory sensory neurons (OSNs), coupling these complexes to the conserved ciliary trafficking pathway. As to expression, expressed in 20 sensory neurons on the distal edge of the antenna.

Its subcellular location is the cell membrane. Functionally, odorant receptor which mediates acceptance or avoidance behavior, depending on its substrates. The odorant receptor repertoire encodes a large collection of odor stimuli that vary widely in identity, intensity, and duration. May form a complex with Orco to form odorant-sensing units, providing sensitive and prolonged odorant signaling and calcium permeability. The sequence is that of Odorant receptor 2a (Or2a) from Drosophila melanogaster (Fruit fly).